The sequence spans 32 residues: Islet amyloid polypeptide (32 aa).

It belongs to the calcitonin family. Can form homodimers. Interacts with IDE and INS. Interaction with INS inhibits homodimerization and fibril formation.

The protein resides in the secreted. In terms of biological role, amylin/IAPP is a glucoregulatory peptide hormone that plays an important role in the regulation of energy homeostasis. Selectively inhibits insulin-stimulated glucose utilization and glycogen deposition in muscle, while not affecting adipocyte glucose metabolism. IAPP function is mediated by the CALCR-RAMPs (AMYRs) receptor complexes. Amylin can also bind CALCR receptor in the absence of RAMPs, although it is more selective for AMYRs. The polypeptide is Islet amyloid polypeptide (IAPP) (Ovis aries (Sheep)).